The primary structure comprises 320 residues: Acetyl-coenzyme A carboxylase carboxyl transferase subunit alpha (320 aa).

In terms of domain architecture, CoA carboxyltransferase C-terminal spans 42–295; the sequence is IEEKAVQALN…GDAIAAAFAE (254 aa).

It belongs to the AccA family. In terms of assembly, acetyl-CoA carboxylase is a heterohexamer composed of biotin carboxyl carrier protein (AccB), biotin carboxylase (AccC) and two subunits each of ACCase subunit alpha (AccA) and ACCase subunit beta (AccD).

The protein localises to the cytoplasm. The enzyme catalyses N(6)-carboxybiotinyl-L-lysyl-[protein] + acetyl-CoA = N(6)-biotinyl-L-lysyl-[protein] + malonyl-CoA. Its pathway is lipid metabolism; malonyl-CoA biosynthesis; malonyl-CoA from acetyl-CoA: step 1/1. Functionally, component of the acetyl coenzyme A carboxylase (ACC) complex. First, biotin carboxylase catalyzes the carboxylation of biotin on its carrier protein (BCCP) and then the CO(2) group is transferred by the carboxyltransferase to acetyl-CoA to form malonyl-CoA. The protein is Acetyl-coenzyme A carboxylase carboxyl transferase subunit alpha of Rhodopseudomonas palustris (strain HaA2).